A 502-amino-acid chain; its full sequence is Nostrin (502 aa).

One can recognise an F-BAR domain in the interval 1–260; that stretch reads MRDPLTDCSY…AISKVDVEKD (260 aa). Serine 114 is modified (phosphoserine). 2 coiled-coil regions span residues 160-230 and 305-335; these read SMTQ…LNQY and KLWR…SSAS. One can recognise an REM-1 domain in the interval 292–372; sequence PMDKERRKSL…SYKLSTVLAD (81 aa). A disordered region spans residues 413 to 437; that stretch reads KAESKAPAGEQNNPSSSRPGSSVSQ. Residues 423–437 are compositionally biased toward low complexity; the sequence is QNNPSSSRPGSSVSQ. Positions 438–497 constitute an SH3 domain; the sequence is GNNQLCKALYTFQARQDDELNLEKGDIVTIHEKKEEGWWFGSLNGKKGHFPAAYVEELPP. Serine 479 carries the post-translational modification Phosphoserine.

In terms of assembly, homotrimer. Interacts with DAB2. Interacts with NOS3, WASL and CAV1. Interacts (via SH3 domain) with DNM2; this interaction allows the recruitment of NOS3 to dynamin-positive structures. As to expression, over-expressed in brain microcapillaries from spontaneously hypertensive rats.

It localises to the cell membrane. Its subcellular location is the cytoplasmic vesicle. The protein resides in the cytoplasm. It is found in the cytoskeleton. The protein localises to the nucleus. Functionally, multivalent adapter protein which may decrease NOS3 activity by inducing its translocation away from the plasma membrane. In Rattus norvegicus (Rat), this protein is Nostrin.